Consider the following 281-residue polypeptide: Merozoite surface protein 2 (281 aa).

The signal sequence occupies residues 1–20; the sequence is MKVIKTLSIINFFIFVTFNI. N-linked (GlcNAc...) asparagine glycans are attached at residues Asn-22 and Asn-36. A disordered region spans residues 42 to 242; sequence SMEESNPPTG…DSQKECTDGN (201 aa). A polymorphic region region spans residues 44–207; the sequence is EESNPPTGAS…EQTESPELQS (164 aa). 3 repeat units span residues 51–58, 59–66, and 67–74. A 3 X 8 AA tandem repeats of G-A-S-G-R-A-G-A region spans residues 51-74; the sequence is GASGRAGAGASGRAGAGASGRAGA. Positions 54–76 are enriched in gly residues; the sequence is GRAGAGASGRAGAGASGRAGAGA. Residues 77–133 show a composition bias toward low complexity; that stretch reads GAVASAGSGDGAVASAGNGANPGADAKRSTSTPATTTTTTTTNDAEASTSTSSENPN. Composition is skewed to polar residues over residues 150 to 174 and 181 to 209; these read NKAN…NVPP and KSPT…QSAP. A glycan (N-linked (GlcNAc...) asparagine) is linked at Asn-158. The N-linked (GlcNAc...) asparagine glycan is linked to Asn-230. A disulfide bridge links Cys-238 with Cys-246. 2 N-linked (GlcNAc...) asparagine glycosylation sites follow: Asn-254 and Asn-255. Asn-255 carries GPI-anchor amidated asparagine lipidation. The propeptide at 256-281 is removed in mature form; sequence SSNIASINKFVVLISATLVLSFAIFI.

Its subcellular location is the cell membrane. In terms of biological role, may play a role in the merozoite attachment to the erythrocyte. The sequence is that of Merozoite surface protein 2 from Plasmodium falciparum (isolate thtn / Thailand).